The following is a 1332-amino-acid chain: Abscisic-aldehyde oxidase (1332 aa).

Residues 1-88 (MDLEFAVNGE…GCSITTSEGL (88 aa)) form the 2Fe-2S ferredoxin-type domain. 3 residues coordinate [2Fe-2S] cluster: Cys-40, Cys-45, and Cys-48. In terms of domain architecture, FAD-binding PCMH-type spans 219–400 (SDHLKYRWTT…LKVEIPSWTA (182 aa)).

It belongs to the xanthine dehydrogenase family. Aldehyde oxidases (AO) are homodimers and heterodimers of AO subunits. AO-delta is a AAO3 homodimer. AAO3 also forms a dimer with AAO2. Interacts with PUB44, and this interaction probably results in targeting of this protein to the proteasome. It depends on [2Fe-2S] cluster as a cofactor. Requires FAD as cofactor. Mo-molybdopterin serves as cofactor. As to expression, expressed in vascular tissues of all organs, particularly in phloem companion cells and xylem parenchymatic cells. Highly expressed in roots and rosettes, and to lower extent in seedlings, stems and flowers. Expressed at very low levels in siliques and dry seeds. Also detected in root dividing cells (tips and primordia), in mesophyll cells and inside the guard cells.

It localises to the cytoplasm. It catalyses the reaction 2-cis-(+)-abscisic aldehyde + O2 + H2O = 2-cis-(+)-abscisate + H2O2 + H(+). It carries out the reaction 1-naphthaldehyde + O2 + H2O = 1-naphthoate + H2O2 + H(+). The catalysed reaction is indole-3-acetaldehyde + O2 + H2O = (indol-3-yl)acetate + H2O2 + H(+). In terms of biological role, in higher plants aldehyde oxidases (AO) appear to be homo- and heterodimeric assemblies of AO subunits with probably different physiological functions. AO-delta may be involved in the last step of abscisic acid biosynthesis, at least in leaves and seeds. In vitro, AO-delta oxidizes abscisic aldehyde to abscisic acid (ABA). In vitro, AO-delta also uses 1-naphthaldehyde, indole-3-aldehyde (IAld), benzaldehyde and cinnamaldehyde as substrate; the AAO2-AAO3 dimer also uses abscisic aldehyde as substrate. This is Abscisic-aldehyde oxidase (AAO3) from Arabidopsis thaliana (Mouse-ear cress).